We begin with the raw amino-acid sequence, 576 residues long: Outer capsid protein VP4 (576 aa).

The protein localises to the virion. This chain is Outer capsid protein VP4 (Segment-4), found in Banna virus (BAV).